The primary structure comprises 168 residues: Probable chemoreceptor glutamine deamidase CheD 2 (168 aa).

It belongs to the CheD family.

It catalyses the reaction L-glutaminyl-[protein] + H2O = L-glutamyl-[protein] + NH4(+). Functionally, probably deamidates glutamine residues to glutamate on methyl-accepting chemotaxis receptors (MCPs), playing an important role in chemotaxis. This chain is Probable chemoreceptor glutamine deamidase CheD 2, found in Leptospira interrogans serogroup Icterohaemorrhagiae serovar copenhageni (strain Fiocruz L1-130).